The sequence spans 127 residues: Small ribosomal subunit protein uS11 (127 aa).

It belongs to the universal ribosomal protein uS11 family. Part of the 30S ribosomal subunit. Interacts with proteins S7 and S18. Binds to IF-3.

In terms of biological role, located on the platform of the 30S subunit, it bridges several disparate RNA helices of the 16S rRNA. Forms part of the Shine-Dalgarno cleft in the 70S ribosome. This chain is Small ribosomal subunit protein uS11, found in Anaeromyxobacter sp. (strain Fw109-5).